The chain runs to 63 residues: MLGQSIRRFTTSVVRRSHYEEGPGKNLPFSVENKWRLLLMMTVYFGSGFAAPFFIVRHQLLKK.

Residues 1–16 (MLGQSIRRFTTSVVRR) constitute a mitochondrion transit peptide. The Mitochondrial matrix segment spans residues 17–33 (SHYEEGPGKNLPFSVEN). Position 25 is an N6-acetyllysine; alternate (Lys-25). Lys-25 is modified (N6-succinyllysine; alternate). The chain crosses the membrane as a helical span at residues 34 to 60 (KWRLLLMMTVYFGSGFAAPFFIVRHQL). The Mitochondrial intermembrane segment spans residues 61–63 (LKK).

This sequence belongs to the cytochrome c oxidase VIIc family. As to quaternary structure, component of the cytochrome c oxidase (complex IV, CIV), a multisubunit enzyme composed of 14 subunits. The complex is composed of a catalytic core of 3 subunits MT-CO1, MT-CO2 and MT-CO3, encoded in the mitochondrial DNA, and 11 supernumerary subunits COX4I, COX5A, COX5B, COX6A, COX6B, COX6C, COX7A, COX7B, COX7C, COX8 and NDUFA4, which are encoded in the nuclear genome. The complex exists as a monomer or a dimer and forms supercomplexes (SCs) in the inner mitochondrial membrane with NADH-ubiquinone oxidoreductase (complex I, CI) and ubiquinol-cytochrome c oxidoreductase (cytochrome b-c1 complex, complex III, CIII), resulting in different assemblies (supercomplex SCI(1)III(2)IV(1) and megacomplex MCI(2)III(2)IV(2)). Interacts with RAB5IF.

Its subcellular location is the mitochondrion inner membrane. Its pathway is energy metabolism; oxidative phosphorylation. Its function is as follows. Component of the cytochrome c oxidase, the last enzyme in the mitochondrial electron transport chain which drives oxidative phosphorylation. The respiratory chain contains 3 multisubunit complexes succinate dehydrogenase (complex II, CII), ubiquinol-cytochrome c oxidoreductase (cytochrome b-c1 complex, complex III, CIII) and cytochrome c oxidase (complex IV, CIV), that cooperate to transfer electrons derived from NADH and succinate to molecular oxygen, creating an electrochemical gradient over the inner membrane that drives transmembrane transport and the ATP synthase. Cytochrome c oxidase is the component of the respiratory chain that catalyzes the reduction of oxygen to water. Electrons originating from reduced cytochrome c in the intermembrane space (IMS) are transferred via the dinuclear copper A center (CU(A)) of subunit 2 and heme A of subunit 1 to the active site in subunit 1, a binuclear center (BNC) formed by heme A3 and copper B (CU(B)). The BNC reduces molecular oxygen to 2 water molecules using 4 electrons from cytochrome c in the IMS and 4 protons from the mitochondrial matrix. The protein is Cytochrome c oxidase subunit 7C, mitochondrial (Cox7c) of Rattus norvegicus (Rat).